The chain runs to 717 residues: Delta-1-pyrroline-5-carboxylate synthase A (717 aa).

A glutamate 5-kinase region spans residues Met1–Arg296. Residues Ser60, Asp157, and Asn176 each coordinate substrate. Residues Ser196–Asp197 and Arg236–Lys242 each bind ATP. Residues Asp297–Ala717 form a gamma-glutamyl phosphate reductase region.

It in the N-terminal section; belongs to the glutamate 5-kinase family. The protein in the C-terminal section; belongs to the gamma-glutamyl phosphate reductase family.

The catalysed reaction is L-glutamate + ATP = L-glutamyl 5-phosphate + ADP. The enzyme catalyses L-glutamate 5-semialdehyde + phosphate + NADP(+) = L-glutamyl 5-phosphate + NADPH + H(+). It functions in the pathway amino-acid biosynthesis; L-proline biosynthesis; L-glutamate 5-semialdehyde from L-glutamate: step 1/2. The protein operates within amino-acid biosynthesis; L-proline biosynthesis; L-glutamate 5-semialdehyde from L-glutamate: step 2/2. P5CS plays a key role in proline biosynthesis, leading to osmoregulation in plants. This Arabidopsis thaliana (Mouse-ear cress) protein is Delta-1-pyrroline-5-carboxylate synthase A (P5CSA).